Reading from the N-terminus, the 881-residue chain is Valine--tRNA ligase (881 aa).

Residues 76–86 carry the 'HIGH' region motif; the sequence is PTVSGSLHIGH. Residues 493 to 526 are disordered; that stretch reads DSPILPDESQLPVDPSSQAPEGYTEDQRGKPGGF. The 'KMSKS' region signature appears at 608–612; sequence KMSKS. Position 611 (K611) interacts with ATP.

Belongs to the class-I aminoacyl-tRNA synthetase family. ValS type 2 subfamily. In terms of assembly, monomer.

The protein localises to the cytoplasm. It catalyses the reaction tRNA(Val) + L-valine + ATP = L-valyl-tRNA(Val) + AMP + diphosphate. Catalyzes the attachment of valine to tRNA(Val). As ValRS can inadvertently accommodate and process structurally similar amino acids such as threonine, to avoid such errors, it has a 'posttransfer' editing activity that hydrolyzes mischarged Thr-tRNA(Val) in a tRNA-dependent manner. This is Valine--tRNA ligase from Thermobifida fusca (strain YX).